The chain runs to 124 residues: Small ribosomal subunit protein uS12 (124 aa).

Basic residues predominate over residues 11-20; the sequence is GRKRLKKKSK. The disordered stretch occupies residues 11-30; that stretch reads GRKRLKKKSKSPALENNPQK. Aspartate 89 bears the 3-methylthioaspartic acid mark. A disordered region spans residues 105-124; sequence EGVANRRQSRSRYGAKKPKK. Residues 111–124 show a composition bias toward basic residues; the sequence is RQSRSRYGAKKPKK.

It belongs to the universal ribosomal protein uS12 family. Part of the 30S ribosomal subunit. Contacts proteins S8 and S17. May interact with IF1 in the 30S initiation complex.

With S4 and S5 plays an important role in translational accuracy. In terms of biological role, interacts with and stabilizes bases of the 16S rRNA that are involved in tRNA selection in the A site and with the mRNA backbone. Located at the interface of the 30S and 50S subunits, it traverses the body of the 30S subunit contacting proteins on the other side and probably holding the rRNA structure together. The combined cluster of proteins S8, S12 and S17 appears to hold together the shoulder and platform of the 30S subunit. The polypeptide is Small ribosomal subunit protein uS12 (Kosmotoga olearia (strain ATCC BAA-1733 / DSM 21960 / TBF 19.5.1)).